The chain runs to 520 residues: ATP synthase subunit alpha (520 aa).

ATP is bound at residue 169 to 176 (GDRKTGKT).

It belongs to the ATPase alpha/beta chains family. F-type ATPases have 2 components, CF(1) - the catalytic core - and CF(0) - the membrane proton channel. CF(1) has five subunits: alpha(3), beta(3), gamma(1), delta(1), epsilon(1). CF(0) has three main subunits: a(1), b(2) and c(9-12). The alpha and beta chains form an alternating ring which encloses part of the gamma chain. CF(1) is attached to CF(0) by a central stalk formed by the gamma and epsilon chains, while a peripheral stalk is formed by the delta and b chains.

It localises to the cell membrane. The enzyme catalyses ATP + H2O + 4 H(+)(in) = ADP + phosphate + 5 H(+)(out). Functionally, produces ATP from ADP in the presence of a proton gradient across the membrane. The alpha chain is a regulatory subunit. In Oenococcus oeni (strain ATCC BAA-331 / PSU-1), this protein is ATP synthase subunit alpha.